A 397-amino-acid chain; its full sequence is MGKAKFERTKPHVNIGTIGHVDHGKTTLTAAISKVLADKYPSATNVQRDFASIDSAPEERQRGITINISHVEYETPKRHYAHVDAPGHADYIKNMITGAAQMDGAILVVAATDGPMAQTREHVLLAKQVGVPYLLVALNKSDMVDDEEILELVELEVRELLSSQDFDGDNAPVVQVSGLKALEGDEKWVEQIVKLMEAVDESIPEPVRDKDKPFLMPVEDVFTITGRGTVVTGRAERGTLAINSDVEIVGIRPTVKTTVTGIEMFHKQLDEAWAGENCGLLLRGTKREDVERGQVIVKPGSVTPHTKFEGTAYILSKEEGGRHNPFYGNYRPQFYFRTTDVTGVITLPEGAEMVMPGDTTDMKVELIQPIAMEEGLGFAIREGGRTVGAGTVTKIVK.

Residues 10–207 (KPHVNIGTIG…AVDESIPEPV (198 aa)) enclose the tr-type G domain. The segment at 19–26 (GHVDHGKT) is G1. Position 19 to 26 (19 to 26 (GHVDHGKT)) interacts with GTP. Thr26 is a binding site for Mg(2+). Residues 63-67 (GITIN) form a G2 region. Residues 84 to 87 (DAPG) form a G3 region. Residues 84 to 88 (DAPGH) and 139 to 142 (NKSD) each bind GTP. The interval 139–142 (NKSD) is G4. A G5 region spans residues 177–179 (SGL).

It belongs to the TRAFAC class translation factor GTPase superfamily. Classic translation factor GTPase family. EF-Tu/EF-1A subfamily. Monomer.

The protein localises to the cytoplasm. The catalysed reaction is GTP + H2O = GDP + phosphate + H(+). GTP hydrolase that promotes the GTP-dependent binding of aminoacyl-tRNA to the A-site of ribosomes during protein biosynthesis. The protein is Elongation factor Tu of Clavibacter sepedonicus (Clavibacter michiganensis subsp. sepedonicus).